Consider the following 67-residue polypeptide: Sodium channel neurotoxin MeuNaTxalpha-10 (67 aa).

An LCN-type CS-alpha/beta domain is found at 2-66 (RDGYIAKPHN…VPIRIPGKCH (65 aa)). 4 cysteine pairs are disulfide-bonded: Cys12/Cys65, Cys16/Cys38, Cys24/Cys48, and Cys28/Cys50. A propeptide (removed by a carboxypeptidase) is located at residue Arg67.

It belongs to the long (4 C-C) scorpion toxin superfamily. Sodium channel inhibitor family. Alpha subfamily. Expressed by the venom gland.

The protein localises to the secreted. Alpha toxins bind voltage-independently at site-3 of sodium channels (Nav) and inhibit the inactivation of the activated channels, thereby blocking neuronal transmission. This Mesobuthus eupeus (Lesser Asian scorpion) protein is Sodium channel neurotoxin MeuNaTxalpha-10.